A 294-amino-acid polypeptide reads, in one-letter code: Proteasome subunit beta 1 (294 aa).

Positions 1-65 (MTADRPALRT…MESGDLAPHG (65 aa)) are cleaved as a propeptide — removed in mature form; by autocatalysis. Thr66 (nucleophile) is an active-site residue.

Belongs to the peptidase T1B family. In terms of assembly, the 20S proteasome core is composed of 14 alpha and 14 beta subunits that assemble into four stacked heptameric rings, resulting in a barrel-shaped structure. The two inner rings, each composed of seven catalytic beta subunits, are sandwiched by two outer rings, each composed of seven alpha subunits. All four combinations of alpha- and beta-subunits (beta2-alpha1, beta2-alpha2, beta1-alpha2 and beta1-alpha1) yield fully assembled and proteolytically active proteasomes. The catalytic chamber with the active sites is on the inside of the barrel. Has probably a gated structure, the ends of the cylinder being occluded by the N-termini of the alpha-subunits. Is likely capped by the proteasome-associated ATPase, ARC.

It is found in the cytoplasm. It catalyses the reaction Cleavage of peptide bonds with very broad specificity.. Its pathway is protein degradation; proteasomal Pup-dependent pathway. With respect to regulation, the formation of the proteasomal ATPase ARC-20S proteasome complex, likely via the docking of the C-termini of ARC into the intersubunit pockets in the alpha-rings, may trigger opening of the gate for substrate entry. Interconversion between the open-gate and close-gate conformations leads to a dynamic regulation of the 20S proteasome proteolysis activity. Functionally, component of the proteasome core, a large protease complex with broad specificity involved in protein degradation. The R.erythropolis proteasomes are able to cleave oligopeptides after Tyr, Phe and Leu, very poorly after Arg but not after Glu. Thus, displays chymotrypsin-like activity, low trypsin-like activity but no caspase-like activity. The chain is Proteasome subunit beta 1 from Rhodococcus erythropolis (Arthrobacter picolinophilus).